A 685-amino-acid polypeptide reads, in one-letter code: MPEQNRILCRELSLLAFNRRVLAQAEDQNVPLLERLRFLCIVSSNLDEFFEVRMAWLKREHKRCPQRRLDNGKMPSETIADVTEAARSLIRHQYDLFNNVLQPELAQEGIHFYRRRNWTDTQKKWIEDYFDRELLPILTPIGLDPSHPFPRPLNKSLNFAVELDGTDAFGRPSGMAIVQAPRILPRVVPLPSELCGGGHGFVFLSSILHAHVGKLFPGMNVKGCHQFRLTRDSDLTVDEEDLQNLRAAIQNELHDREYGDGVRLEVADTCPAYIRDFLLAQFKLTAAELYQVKGPVNLVRLNAVPDLVNRPDLKFPTHTPGRLKALGKTASIFDLVRQSPILLHHPYQSFDPVVEMMREAAADPAVLAVKMTIYRTGTRSELVRALMKAALAGKQVTVVVELMARFDEANNVNWAKQLEEAGAHVVYGVFGYKVHAKMALVIRREDGVLKRYAHLGTGNYHQGTSRIYTDFGLITADEQITADVNILFMEITGLGKPGRLNKLYQSPFTLHKMVIDRIARETEHAKAGKPARITAKMNSLIEPTVIEALYRASAAGVQIDLIVRGMCTLRPGVKGLSENIRVRSIVGRQLEHARVYYFHNNGTDDTFISSADWMGRNFFRRIETATPITAPELKKRVIHEGLTMALDDNTHAWLMQPDGGYIRAAPAEGESEADLQNDLWTLLGG.

Residue asparagine 45 participates in ATP binding. Mg(2+) is bound by residues arginine 375 and arginine 405. The Phosphohistidine intermediate role is filled by histidine 435. Residues tyrosine 468, arginine 564, and histidine 592 each contribute to the ATP site.

The protein belongs to the polyphosphate kinase 1 (PPK1) family. It depends on Mg(2+) as a cofactor. In terms of processing, an intermediate of this reaction is the autophosphorylated ppk in which a phosphate is covalently linked to a histidine residue through a N-P bond.

It carries out the reaction [phosphate](n) + ATP = [phosphate](n+1) + ADP. In terms of biological role, catalyzes the reversible transfer of the terminal phosphate of ATP to form a long-chain polyphosphate (polyP). The protein is Polyphosphate kinase of Neisseria meningitidis serogroup B (strain ATCC BAA-335 / MC58).